A 178-amino-acid chain; its full sequence is MEQFHGTTIVSVRRGDKVALGGDGQVTLGNIVMKGGARKVRRIYNNQVLVGFAGGTADAFSLLDRFEAKLEKHQGNLTRAAVELAKDWRTDRMLRRLEAMLITADATTTLVITGNGDVLDPEGGICAIGSGGAYAQAAARALVENTDLSPRDIVEKSLGIAGDMCIYTNHNRIIETIE.

Residue threonine 7 is part of the active site. Residues glycine 162, cysteine 165, and threonine 168 each contribute to the Na(+) site.

The protein belongs to the peptidase T1B family. HslV subfamily. As to quaternary structure, a double ring-shaped homohexamer of HslV is capped on each side by a ring-shaped HslU homohexamer. The assembly of the HslU/HslV complex is dependent on binding of ATP.

It is found in the cytoplasm. It carries out the reaction ATP-dependent cleavage of peptide bonds with broad specificity.. With respect to regulation, allosterically activated by HslU binding. Functionally, protease subunit of a proteasome-like degradation complex believed to be a general protein degrading machinery. The polypeptide is ATP-dependent protease subunit HslV (Burkholderia orbicola (strain AU 1054)).